Consider the following 176-residue polypeptide: Ribosome maturation factor RimM (176 aa).

A PRC barrel domain is found at 100-173 (KDEYHYHDLI…WLLINPPPGL (74 aa)).

The protein belongs to the RimM family. As to quaternary structure, binds ribosomal protein uS19.

The protein localises to the cytoplasm. Functionally, an accessory protein needed during the final step in the assembly of 30S ribosomal subunit, possibly for assembly of the head region. Essential for efficient processing of 16S rRNA. May be needed both before and after RbfA during the maturation of 16S rRNA. It has affinity for free ribosomal 30S subunits but not for 70S ribosomes. This chain is Ribosome maturation factor RimM, found in Prochlorococcus marinus (strain NATL1A).